The following is a 305-amino-acid chain: MIKQRTLKRIVQATGVGLHTGKKVTLTLRPAPANTGVIYRRTDLNPPVDFPADAKSVRDTMLCTCLVNEHDVRISTVEHLNAALAGLGIDNIVIEVNAPEIPIMDGSAAPFVYLLLDAGIDELNCAKKFVRIKETVRVEDGDKWAEFKPYNGFSLDFTIDFNHPAIDSSNQRYAMNFSADAFMRQISRARTFGFMRDIEYLQSRGLCLGGSFDCAIVVDDYRVLNEDGLRFEDEFVRHKMLDAIGDLFMCGHNIIGAFIAYKSGHALNNKLLQAVLAKQEAWEYVTFQDDAELPLTFKAPSAVLA.

The Zn(2+) site is built by histidine 79, histidine 238, and aspartate 242. Histidine 265 acts as the Proton donor in catalysis.

The protein belongs to the LpxC family. The cofactor is Zn(2+).

The enzyme catalyses a UDP-3-O-[(3R)-3-hydroxyacyl]-N-acetyl-alpha-D-glucosamine + H2O = a UDP-3-O-[(3R)-3-hydroxyacyl]-alpha-D-glucosamine + acetate. Its pathway is glycolipid biosynthesis; lipid IV(A) biosynthesis; lipid IV(A) from (3R)-3-hydroxytetradecanoyl-[acyl-carrier-protein] and UDP-N-acetyl-alpha-D-glucosamine: step 2/6. Its function is as follows. Catalyzes the hydrolysis of UDP-3-O-myristoyl-N-acetylglucosamine to form UDP-3-O-myristoylglucosamine and acetate, the committed step in lipid A biosynthesis. This chain is UDP-3-O-acyl-N-acetylglucosamine deacetylase, found in Shigella boydii serotype 4 (strain Sb227).